The chain runs to 392 residues: uncharacterized protein (392 aa).

10 helical membrane passes run 2 to 23, 38 to 60, 73 to 95, 153 to 175, 195 to 217, 237 to 259, 272 to 291, 297 to 319, 331 to 353, and 357 to 379; these read WLANFFVSASTTMIVPFLSLYI, SGYVFGITFLMAFLVSPFWGRFG, GTGIALSIFFMGFVTSVYQLFFL, FTYTFFITSFVIFSSVLLVLFGV, VLSYIFHHPALWVMMLLTMLIQT, VNLAFFSGMAFSATGLGSLLLAR, RILIGLLLAASFFFIPQALA, LLVFRFLFGMAMGGLLPCITAAI, VLGYNVSFRFLGNVLGPLLGGII, and FTISATFYVTAFLFFAGACMLWI.

This sequence belongs to the major facilitator superfamily.

It localises to the cell membrane. This is an uncharacterized protein from Bacillus subtilis (strain 168).